Here is a 342-residue protein sequence, read N- to C-terminus: AA9 family lytic polysaccharide monooxygenase AA9-X282 (342 aa).

The N-terminal stretch at Met-1 to Ala-18 is a signal peptide. His-17 contributes to the Cu(2+) binding site. Phosphothreonine occurs at positions 19 and 57. Ser-59 carries the post-translational modification Phosphoserine. Cys-63 and Cys-181 are disulfide-bonded. His-93 contributes to the Cu(2+) binding site. O2 contacts are provided by His-167 and Gln-176. Tyr-178 contributes to the Cu(2+) binding site. N-linked (GlcNAc...) asparagine glycosylation is present at Asn-189. Residues Ser-233–Pro-263 are X282 extension. Residues Val-281 to Pro-302 are disordered. Positions Pro-285 to Pro-302 are enriched in pro residues. The 37-residue stretch at Pro-306–Leu-342 folds into the CBM1 domain.

This sequence belongs to the polysaccharide monooxygenase AA9 family. The cofactor is Cu(2+).

The protein resides in the secreted. The enzyme catalyses [(1-&gt;4)-beta-D-glucosyl]n+m + reduced acceptor + O2 = 4-dehydro-beta-D-glucosyl-[(1-&gt;4)-beta-D-glucosyl]n-1 + [(1-&gt;4)-beta-D-glucosyl]m + acceptor + H2O.. In terms of biological role, lytic polysaccharide monooxygenase (LPMO) that depolymerizes crystalline and amorphous polysaccharides via the oxidation of scissile alpha- or beta-(1-4)-glycosidic bonds, yielding C1 oxidation products. Catalysis by LPMOs requires the reduction of the active-site copper from Cu(II) to Cu(I) by a reducing agent and H(2)O(2) or O(2) as a cosubstrate. Shows only weak binding properties to cellulose, and low cellulolytic oxidative activity which questions the involvement of X282 extension-containing AA9 proteins in the degradation of plant cell wall and opens new avenues as to the divergence of function of some AA9 members. This Coprinopsis cinerea (strain Okayama-7 / 130 / ATCC MYA-4618 / FGSC 9003) (Inky cap fungus) protein is AA9 family lytic polysaccharide monooxygenase AA9-X282.